Here is a 338-residue protein sequence, read N- to C-terminus: Solute carrier family 35 member G4 (338 aa).

A disordered region spans residues 1-29; the sequence is MAGSHPYFNLPDSTHPSPPSTPPSLHWHQ. Helical transmembrane passes span 37 to 57, 160 to 180, 190 to 210, 221 to 241, 250 to 270, 281 to 301, and 305 to 325; these read TNGLLVALLGGGLPAGFVGPL, CGLLGSILGLIIIVGPGLWTL, GLGYVQAFLGGLALSLGLLVY, TVAFLSGLVGLLGSVPGLFVL, LLSWSCVGAVGILTLVSFTCV, LVCAVLHSEVVMALILQYFML, and VAPSDIMGAGVVLGSIAIITA. In terms of domain architecture, EamA 1 spans 49–174; the sequence is LPAGFVGPLS…SILGLIIIVG (126 aa). In terms of domain architecture, EamA 2 spans 272 to 325; the sequence is YAVTKAHPALVCAVLHSEVVMALILQYFMLHETVAPSDIMGAGVVLGSIAIITA.

It belongs to the SLC35G solute transporter family.

It localises to the membrane. This chain is Solute carrier family 35 member G4 (SLC35G4), found in Homo sapiens (Human).